The chain runs to 1150 residues: C5a peptidase (1150 aa).

The signal sequence occupies residues 1-31; the sequence is MRKKQKLPFDKLAIALMSTSILLNAQSDIKA. A disordered region spans residues 33–73; the sequence is TVTEDTPAAEQAVETPQPTAVSEEVPSSKETKTPQTPDNAE. The region spanning 99 to 581 is the Peptidase S8 domain; the sequence is KATIRDLNDP…AGAVDAKKAS (483 aa). Catalysis depends on charge relay system residues D130, H193, and S512. Composition is skewed to basic and acidic residues over residues 1029-1054 and 1061-1073; these read EGHSNKPEQDGSDQAPDKKPEAKPEQ and PDKKPETKPEKDS. The tract at residues 1029-1116 is disordered; sequence EGHSNKPEQD…RDQLPTTNDK (88 aa). A run of 3 repeats spans residues 1034–1050, 1051–1067, and 1068–1084. Residues 1034–1084 form a 3 X 17 AA tandem repeats region; sequence KPEQDGSDQAPDKKPEAKPEQDGSGQTPDKKPETKPEKDSSGQTPGKTPQK. Positions 1075-1089 are enriched in polar residues; that stretch reads GQTPGKTPQKGQPSR. An LPXTG sorting signal motif is present at residues 1110–1114; it reads LPTTN. The residue at position 1113 (T1113) is a Pentaglycyl murein peptidoglycan amidated threonine. Residues 1114 to 1150 constitute a propeptide, removed by sortase; the sequence is NDKDTNRLHLLKLVMTTFFFGLVAHIFKTKRQKETKK.

Belongs to the peptidase S8 family. Cleaved by SpeB protease; leading to its degradation. Degradation by SpeB is probably strictly regulated to preserve integrity of C5a peptidase.

The protein resides in the secreted. It is found in the cell wall. The enzyme catalyses The primary cleavage site is at 67-His-|-Lys-68 in human C5a with a minor secondary cleavage site at 58-Ala-|-Ser-59.. Functionally, this virulence factor of S.pyogenes specifically cleaves the human serum chemotaxin C5a at '68-Lys-|-Asp-69' bond near its C-terminus, destroying its ability to serve as a chemoattractant. The polypeptide is C5a peptidase (scpA) (Streptococcus pyogenes serotype M18 (strain MGAS8232)).